An 876-amino-acid chain; its full sequence is Alanine--tRNA ligase (876 aa).

N6-acetyllysine is present on K74. 4 residues coordinate Zn(2+): H564, H568, C666, and H670.

This sequence belongs to the class-II aminoacyl-tRNA synthetase family. As to quaternary structure, homotetramer. The cofactor is Zn(2+).

It localises to the cytoplasm. The enzyme catalyses tRNA(Ala) + L-alanine + ATP = L-alanyl-tRNA(Ala) + AMP + diphosphate. In terms of biological role, catalyzes the attachment of alanine to tRNA(Ala) in a two-step reaction: alanine is first activated by ATP to form Ala-AMP and then transferred to the acceptor end of tRNA(Ala). Also edits incorrectly charged Ser-tRNA(Ala) and Gly-tRNA(Ala) via its editing domain. The polypeptide is Alanine--tRNA ligase (Escherichia coli O6:K15:H31 (strain 536 / UPEC)).